A 352-amino-acid chain; its full sequence is Phosphoribosylformylglycinamidine cyclo-ligase (352 aa).

Belongs to the AIR synthase family.

The protein resides in the cytoplasm. It catalyses the reaction 2-formamido-N(1)-(5-O-phospho-beta-D-ribosyl)acetamidine + ATP = 5-amino-1-(5-phospho-beta-D-ribosyl)imidazole + ADP + phosphate + H(+). Its pathway is purine metabolism; IMP biosynthesis via de novo pathway; 5-amino-1-(5-phospho-D-ribosyl)imidazole from N(2)-formyl-N(1)-(5-phospho-D-ribosyl)glycinamide: step 2/2. In Pseudomonas fluorescens (strain Pf0-1), this protein is Phosphoribosylformylglycinamidine cyclo-ligase.